A 771-amino-acid polypeptide reads, in one-letter code: MKKLITDLNLNDKKVLIRLDLNVPLKGKKITSLKRIEESIPTIKYVQERGGKIILLSHLGRVKTKEDKEKKSLSIVVEALASLLNSPVKFVDQTRGKKLESAIEKLKPGDVLLIENTRFEDLNNNAESNNDPELGKYWASLGDVFINDAFGTAHRAHASNVGIASNIKESALGILVQKEVNALWKLMEQQEKPFVAILGGSKVSDKINVLEKIIDKVDRLIIGGAMAYTFLKAQGIGIGDSIYEQDKIEFATEFLKKYNHKIILPIDHALAKKFKNAKPIFNNENPLEIPQTFIGMDVGPKTIELIHKYIKGDTKLGISPAKTIFWNGPMGVTEFEEFQSGSLAVVEAISQLVGAYSVVGGGDSIAIIEKLNAQMLFSHISTGGGASLEFIESKVLPGIDAIQNYEQTYEQYDSQVQSQDFSQNFDSPLVEETFSQSTSENFSDFASSTQEHFATSENQNTLINNYENPGFDSQDMFKTEEQNDSTSSFLTSTNPFSSEFSNEFKTSDFQDLKQTQETETQETLIPHTFEYTTDDLRHTLEQYVRETSFQTRESTFPTEEASFETLEETSFQTLEESFPTQSFEQVEQTSEKNMEVSTENFENASSQTNSFTVSDIPKTTSTFEDLETPETQNTTLEEVALETSNFEAQNLETPNLQTSNFETSNLETSNFETSNFETSTFESFNTGNFSTPSSTFEDLDLQSATFQTNDESERSTQENFEPTEVIESDLLAMKTTELEQEITNNTSRDILSEDEVAAPHKKRFWFFGRKR.

The segment at 1 to 406 is phosphoglycerate kinase; it reads MKKLITDLNL…PGIDAIQNYE (406 aa). Substrate-binding positions include 20 to 22, Arg-35, 58 to 61, Arg-118, and Arg-155; these read DLN and HLGR. Residues Lys-206, Gly-295, Glu-334, and 361 to 364 each bind ATP; that span reads GGDS. The segment at 407-771 is unknown; that stretch reads QTYEQYDSQV…KRFWFFGRKR (365 aa).

The protein in the N-terminal section; belongs to the phosphoglycerate kinase family. In terms of assembly, monomer.

It localises to the cytoplasm. The enzyme catalyses (2R)-3-phosphoglycerate + ATP = (2R)-3-phospho-glyceroyl phosphate + ADP. It functions in the pathway carbohydrate degradation; glycolysis; pyruvate from D-glyceraldehyde 3-phosphate: step 2/5. The polypeptide is Phosphoglycerate kinase (pgk) (Mycoplasmopsis pulmonis (strain UAB CTIP) (Mycoplasma pulmonis)).